Here is a 379-residue protein sequence, read N- to C-terminus: Oxidoreductase chry3 (379 aa).

2 disordered regions span residues 1–23 (MTTA…QPTP) and 126–150 (EGDD…TSHM). The span at 126-138 (EGDDSAPAEEEAD) shows a compositional bias: acidic residues.

Belongs to the asaB hydroxylase/desaturase family.

It participates in pigment biosynthesis. In terms of biological role, oxidoreductase; part of the gene cluster that mediates the biosynthesis of the yellow pigment chrysogine. Pyruvic acid and anthranilic acid are likely substrates for the nonribosomal peptide synthetase chry1/NRPS14, with pyruvic acid adenylated by the first A domain and anthranilic acid by the second. If pyruvic acid and anthranilic acid are merged and released from chry1/NRPS14 by hydrolysis, a subsequent amidation would lead to 2-pyruvoylaminobenzamide. This process is probably catalyzed by the amidotransferase chry2 using glutamine as amino donor. The dehydrogenase chry5 that has a terminal berberine bridge domain for C-N cyclization could catalyze the cyclization of 2-pyruvoylaminobenzamide to yield acetyl-4(3H)-quinazolidinone. A final reduction of acetyl-4(3H)-quinazolidinone catalyzed by the oxidoreductase chry4 would result in chrysogine. The chain is Oxidoreductase chry3 from Gibberella zeae (strain ATCC MYA-4620 / CBS 123657 / FGSC 9075 / NRRL 31084 / PH-1) (Wheat head blight fungus).